Consider the following 503-residue polypeptide: Probable cytosol aminopeptidase (503 aa).

K270 and D275 together coordinate Mn(2+). The active site involves K282. Residues D293, D352, and E354 each contribute to the Mn(2+) site. The active site involves R356.

Belongs to the peptidase M17 family. The cofactor is Mn(2+).

The protein resides in the cytoplasm. It carries out the reaction Release of an N-terminal amino acid, Xaa-|-Yaa-, in which Xaa is preferably Leu, but may be other amino acids including Pro although not Arg or Lys, and Yaa may be Pro. Amino acid amides and methyl esters are also readily hydrolyzed, but rates on arylamides are exceedingly low.. The catalysed reaction is Release of an N-terminal amino acid, preferentially leucine, but not glutamic or aspartic acids.. Functionally, presumably involved in the processing and regular turnover of intracellular proteins. Catalyzes the removal of unsubstituted N-terminal amino acids from various peptides. The protein is Probable cytosol aminopeptidase of Escherichia coli O139:H28 (strain E24377A / ETEC).